The following is a 565-amino-acid chain: Tyrosine-protein phosphatase non-receptor type 5 (565 aa).

The segment covering 1 to 16 has biased composition (basic and acidic residues); sequence MNYEGARSERENHAAD. The segment at 1-80 is disordered; it reads MNYEGARSER…KPPPRGAGSH (80 aa). Pro residues predominate over residues 56-75; that stretch reads MPPPPPPSPPSDPAQKPPPR. 2 consecutive transmembrane segments (helical) span residues 88–108 and 146–166; these read LCLFAASQFLLACGVLWFSGY and LLLVFLSVGLVLVTTLVWHLL. The disordered stretch occupies residues 169–189; the sequence is PPEPPTPLPPEDRRQSVSRQP. The residue at position 245 (serine 245) is a Phosphoserine; by PKA. Residue threonine 255 is modified to Phosphothreonine; by MAPK. Position 268 is a phosphoserine; by MAPK (serine 268). In terms of domain architecture, Tyrosine-protein phosphatase spans 300-555; it reads LQAEFFEIPM…QFVHHVMSLY (256 aa). Substrate-binding positions include aspartate 461, 496-502, and glutamine 540; that span reads CSAGIGR. Catalysis depends on cysteine 496, which acts as the Phosphocysteine intermediate.

The protein belongs to the protein-tyrosine phosphatase family. Non-receptor class subfamily. In terms of processing, phosphorylation at Ser-245 by PKA deactivates PTPN5. Phosphorylation at Thr-255 and Ser-268 by MAPKs stabilizes the phosphatase, dephosphorylation of these sites results in ubiquitin-mediated degradation of the active phosphatase.

Its subcellular location is the endoplasmic reticulum membrane. It carries out the reaction O-phospho-L-tyrosyl-[protein] + H2O = L-tyrosyl-[protein] + phosphate. In terms of biological role, may regulate the activity of several effector molecules involved in synaptic plasticity and neuronal cell survival, including MAPKs, Src family kinases and NMDA receptors. The chain is Tyrosine-protein phosphatase non-receptor type 5 (PTPN5) from Homo sapiens (Human).